The following is a 741-amino-acid chain: Ethylene receptor (741 aa).

3 helical membrane-spanning segments follow: residues 23–43 (ISDF…IYFV), 53–73 (WVLV…LINL), and 92–112 (VLTA…IPDL). Residues cysteine 65 and histidine 69 each contribute to the Cu cation site. In terms of domain architecture, GAF spans 158–307 (DRHTILKTTL…VVADQVAVAL (150 aa)). The Histidine kinase domain occupies 350–589 (VMNHEMRTPM…TFIVKLGFPE (240 aa)). Histidine 353 is subject to Phosphohistidine; by autocatalysis. Positions 615–732 (KVLVMDDNGV…KMRSVLSELL (118 aa)) constitute a Response regulatory domain. Aspartate 663 is subject to 4-aspartylphosphate.

Belongs to the ethylene receptor family. Homodimer; disulfide-linked. It depends on Cu cation as a cofactor. In terms of processing, activation probably requires a transfer of a phosphate group between a His in the transmitter domain and an Asp of the receiver domain.

Its subcellular location is the endoplasmic reticulum membrane. It carries out the reaction ATP + protein L-histidine = ADP + protein N-phospho-L-histidine.. Its function is as follows. May act early in the ethylene signal transduction pathway, possibly as an ethylene receptor, or as a regulator of the pathway. The chain is Ethylene receptor (ETR1) from Malus domestica (Apple).